The chain runs to 318 residues: tRNA U34 carboxymethyltransferase (318 aa).

Carboxy-S-adenosyl-L-methionine is bound by residues Lys88, Trp102, Lys107, Gly126, 176 to 177 (LE), Met192, Tyr196, and Arg311.

Belongs to the class I-like SAM-binding methyltransferase superfamily. CmoB family. As to quaternary structure, homotetramer.

The enzyme catalyses carboxy-S-adenosyl-L-methionine + 5-hydroxyuridine(34) in tRNA = 5-carboxymethoxyuridine(34) in tRNA + S-adenosyl-L-homocysteine + H(+). Functionally, catalyzes carboxymethyl transfer from carboxy-S-adenosyl-L-methionine (Cx-SAM) to 5-hydroxyuridine (ho5U) to form 5-carboxymethoxyuridine (cmo5U) at position 34 in tRNAs. The protein is tRNA U34 carboxymethyltransferase of Pseudomonas putida (strain W619).